The primary structure comprises 312 residues: Fibrinogen-like protein 1 (312 aa).

An N-terminal signal peptide occupies residues 1–22 (MAKVFSFILVTTALTMGREISA). A coiled-coil region spans residues 23-61 (LEDCAQEQMRLRAQVRLLETRVKQQQVKIKQLLQENEVQ). The region spanning 74 to 306 (LGSKRQYADC…SVVMKIRPND (233 aa)) is the Fibrinogen C-terminal domain. Disulfide bonds link cysteine 83–cysteine 112 and cysteine 248–cysteine 261.

As to quaternary structure, homodimer. Interacts (via the Fibrinogen C-terminal domain) with LAG3 (via Ig-like domains 1 and 2). Under normal conditions, liver-specific.

The protein localises to the secreted. Its function is as follows. Immune suppressive molecule that inhibits antigen-specific T-cell activation by acting as a major ligand of LAG3. Responsible for LAG3 T-cell inhibitory function. Binds LAG3 independently from MHC class II (MHC-II). Secreted by, and promotes growth of, hepatocytes. The polypeptide is Fibrinogen-like protein 1 (Homo sapiens (Human)).